A 331-amino-acid chain; its full sequence is L-lactate dehydrogenase A chain (331 aa).

NAD(+) contacts are provided by residues 29-57 (GMVGMASAISILIKDLGDELAMVDVMEDK) and R98. Substrate contacts are provided by R105, N137, and R168. N137 is an NAD(+) binding site. H192 acts as the Proton acceptor in catalysis. Position 247 (T247) interacts with substrate.

It belongs to the LDH/MDH superfamily. LDH family. In terms of assembly, homotetramer.

The protein localises to the cytoplasm. It carries out the reaction (S)-lactate + NAD(+) = pyruvate + NADH + H(+). It participates in fermentation; pyruvate fermentation to lactate; (S)-lactate from pyruvate: step 1/1. Functionally, interconverts simultaneously and stereospecifically pyruvate and lactate with concomitant interconversion of NADH and NAD(+). The sequence is that of L-lactate dehydrogenase A chain (ldha) from Harpagifer antarcticus (Antarctic spiny plunderfish).